Consider the following 308-residue polypeptide: Isoaspartyl peptidase/L-asparaginase (308 aa).

N-acetylmethionine is present on methionine 1. Threonine 168 serves as the catalytic Nucleophile. Substrate contacts are provided by residues 196–199 (RVGD) and 219–222 (TGHG).

It belongs to the Ntn-hydrolase family. As to quaternary structure, heterodimer of an alpha and beta chain produced by autocleavage. This heterodimer may then dimerize in turn, giving rise to a heterotetramer. Cleaved into an alpha and beta chain by autocatalysis; this activates the enzyme. The N-terminal residue of the beta subunit is responsible for the nucleophile hydrolase activity. As to expression, expressed in brain, kidney, testis and tissues of the gastrointestinal tract. Present in sperm (at protein level). Over-expressed in uterine, mammary, prostatic and ovarian carcinoma.

The protein localises to the cytoplasm. The catalysed reaction is L-asparagine + H2O = L-aspartate + NH4(+). It catalyses the reaction Cleavage of a beta-linked Asp residue from the N-terminus of a polypeptide.. With respect to regulation, glycine accelerates autocleavage into an alpha and beta chain. In terms of biological role, has both L-asparaginase and beta-aspartyl peptidase activity. May be involved in the production of L-aspartate, which can act as an excitatory neurotransmitter in some brain regions. Is highly active with L-Asp beta-methyl ester. Besides, has catalytic activity toward beta-aspartyl dipeptides and their methyl esters, including beta-L-Asp-L-Phe, beta-L-Asp-L-Phe methyl ester (aspartame), beta-L-Asp-L-Ala, beta-L-Asp-L-Leu and beta-L-Asp-L-Lys. Does not have aspartylglucosaminidase activity and is inactive toward GlcNAc-L-Asn. Likewise, has no activity toward glutamine. The sequence is that of Isoaspartyl peptidase/L-asparaginase (ASRGL1) from Homo sapiens (Human).